A 580-amino-acid chain; its full sequence is Aspartate--tRNA ligase (580 aa).

E173 is a binding site for L-aspartate. The aspartate stretch occupies residues 195–198 (QIYK). Residue R217 participates in L-aspartate binding. Residues 217 to 219 (RDE) and Q226 contribute to the ATP site. H443 contacts L-aspartate. ATP is bound at residue E477. R484 is a binding site for L-aspartate. 529–532 (GIER) serves as a coordination point for ATP.

Belongs to the class-II aminoacyl-tRNA synthetase family. Type 1 subfamily. As to quaternary structure, homodimer.

It localises to the cytoplasm. It catalyses the reaction tRNA(Asp) + L-aspartate + ATP = L-aspartyl-tRNA(Asp) + AMP + diphosphate. Functionally, catalyzes the attachment of L-aspartate to tRNA(Asp) in a two-step reaction: L-aspartate is first activated by ATP to form Asp-AMP and then transferred to the acceptor end of tRNA(Asp). In Malacoplasma penetrans (strain HF-2) (Mycoplasma penetrans), this protein is Aspartate--tRNA ligase.